The primary structure comprises 299 residues: Biotin transporter (299 aa).

10 helical membrane-spanning segments follow: residues 2–22 (ALLI…GEYL), 26–46 (VDSY…FLPF), 56–76 (TVGL…MLSF), 81–101 (YLTV…ITLI), 110–130 (LRWG…IIRY), 137–157 (FWTG…GMVG), 172–192 (AFAW…FLLG), 202–222 (LQWG…YFMW), 233–253 (TLGI…LAIW), and 256–276 (QPHW…LWVH). 2 consecutive EamA domains span residues 3-128 (LLII…AGII) and 139-274 (TGLL…ASLW).

Belongs to the drug/metabolite transporter (DMT) superfamily. 10 TMS drug/metabolite exporter (DME) (TC 2.A.7.3) family.

It is found in the cell inner membrane. It carries out the reaction biotin(in) = biotin(out). Uptake of biotin. The sequence is that of Biotin transporter from Escherichia coli O157:H7.